A 426-amino-acid chain; its full sequence is MFKNLAGSFRAVSRVAFKTRPSLVRSYAAFDRSKPHVNIGTIGHVDHGKTTLTAAITKVLSEKGGANFLDYGSIDRAPEERARGITISTAHVEYQTDKRHYAHVDCPGHADYIKNMITGAAQMDGAIIVVAATDGQMPQTREHLLLARQVGVQHLVVFVNKVDTIDDPEMLELVEMEMRELLSQYGFDGDNTPVIMGSALCALESKQPEIGVQAIEKLLDAVDEHIPTPTRDLEQPFLLPVEDVFSISGRGTVVTGRVERGSLKKGEEIEIVGDFDKPFKTTVTGIEMFKKELDAAMAGDNAGILLRGVKRDDVKRGMVLAKPSTVTSHKKVLASLYILSKEEGGRHSPFGENYKPQLFIRTTDVTGTLRFPAGEGVDHSQMVMPGDNVEMEIELVRKTPLEVNQRFNIREGGKTVGTGLVTRIIE.

The transit peptide at 1–27 directs the protein to the mitochondrion; the sequence is MFKNLAGSFRAVSRVAFKTRPSLVRSY. In terms of domain architecture, tr-type G spans 34–230; that stretch reads KPHVNIGTIG…AVDEHIPTPT (197 aa). The segment at 43–50 is G1; the sequence is GHVDHGKT. GTP is bound at residue 43-50; that stretch reads GHVDHGKT. The interval 84–88 is G2; the sequence is GITIS. The G3 stretch occupies residues 105-108; it reads DCPG. GTP-binding positions include 105–109 and 160–163; these read DCPGH and NKVD. The tract at residues 160–163 is G4; the sequence is NKVD. The segment at 198–200 is G5; it reads SAL.

This sequence belongs to the TRAFAC class translation factor GTPase superfamily. Classic translation factor GTPase family. EF-Tu/EF-1A subfamily.

It is found in the mitochondrion. Its pathway is protein biosynthesis; polypeptide chain elongation. Its function is as follows. G-protein that, in its active GTP-bound form, binds to and delivers aminoacyl-tRNA to the A-site of ribosomes during protein biosynthesis. In the presence of a correct codon-anticodon match between the aminoacyl-tRNA and the A-site codon of the ribosome-bound mRNA, the ribosome acts as a GTPase activator and the GTP is hydrolyzed. The inactive GDP-bound form leaves the ribosome and must be recycled before binding another molecule of aminoacyl-tRNA. Required for mitochondrial protein biosynthesis and maintenance of mitochondrial DNA. This chain is Elongation factor Tu, mitochondrial (TUF1), found in Meyerozyma guilliermondii (strain ATCC 6260 / CBS 566 / DSM 6381 / JCM 1539 / NBRC 10279 / NRRL Y-324) (Yeast).